A 77-amino-acid chain; its full sequence is Acyl carrier protein (77 aa).

The Carrier domain maps to 2-77; the sequence is SAIDKRVKEI…DAIDYITEHT (76 aa). S37 carries the O-(pantetheine 4'-phosphoryl)serine modification.

It belongs to the acyl carrier protein (ACP) family. 4'-phosphopantetheine is transferred from CoA to a specific serine of apo-ACP by AcpS. This modification is essential for activity because fatty acids are bound in thioester linkage to the sulfhydryl of the prosthetic group.

The protein resides in the cytoplasm. The protein operates within lipid metabolism; fatty acid biosynthesis. Carrier of the growing fatty acid chain in fatty acid biosynthesis. The chain is Acyl carrier protein from Geobacter metallireducens (strain ATCC 53774 / DSM 7210 / GS-15).